Here is a 444-residue protein sequence, read N- to C-terminus: 23S rRNA (uracil(1939)-C(5))-methyltransferase RlmD (444 aa).

Positions 5–64 constitute a TRAM domain; the sequence is KPKLNLTSQTARIVNLSHDGRGIARINGKATFIQGALPGEVVEFQYTRVKKDFDEGKLLS. Positions 77, 83, 86, and 166 each coordinate [4Fe-4S] cluster. Residues glutamine 276, phenylalanine 305, asparagine 310, glutamate 326, asparagine 353, and aspartate 374 each coordinate S-adenosyl-L-methionine. Cysteine 400 serves as the catalytic Nucleophile.

The protein belongs to the class I-like SAM-binding methyltransferase superfamily. RNA M5U methyltransferase family. RlmD subfamily.

The enzyme catalyses uridine(1939) in 23S rRNA + S-adenosyl-L-methionine = 5-methyluridine(1939) in 23S rRNA + S-adenosyl-L-homocysteine + H(+). Its function is as follows. Catalyzes the formation of 5-methyl-uridine at position 1939 (m5U1939) in 23S rRNA. This Legionella pneumophila (strain Lens) protein is 23S rRNA (uracil(1939)-C(5))-methyltransferase RlmD.